The primary structure comprises 229 residues: MKSYGAEFLGTFWLVLGGCGSAVLAAGFPNLGIGFAGVALAFGLTVVTMAYAIGHISGCHLNPAVSIGLWAGGRFPAGQLAPYIVAQVLGAIAAGAVLYVIASGGAGFDVAKGFASNGYAEHSPGGYSLLAALVCEVVMTMFFLLVIMGATDKRAPAGFAPLAIGLALTLIHLISIPVTNTSVNPARSTGVALFVGGWAVQQLWLFWLAPIIGAVLGAKVYRLIAGESE.

Helical transmembrane passes span 8 to 28 (FLGTFWLVLGGCGSAVLAAGF) and 33 to 53 (IGFAGVALAFGLTVVTMAYAI). The short motif at 62-64 (NPA) is the NPA 1 element. Transmembrane regions (helical) follow at residues 88-108 (VLGAIAAGAVLYVIASGGAGF), 129-149 (LLAALVCEVVMTMFFLLVIMG), and 158-178 (GFAPLAIGLALTLIHLISIPV). Residues 184-186 (NPA) carry the NPA 2 motif. A helical membrane pass occupies residues 192-212 (ALFVGGWAVQQLWLFWLAPII).

The protein belongs to the MIP/aquaporin (TC 1.A.8) family. In terms of assembly, homotetramer.

The protein resides in the cell inner membrane. It catalyses the reaction H2O(in) = H2O(out). Its function is as follows. Channel that permits osmotically driven movement of water in both directions. It is involved in the osmoregulation and in the maintenance of cell turgor during volume expansion in rapidly growing cells. It mediates rapid entry or exit of water in response to abrupt changes in osmolarity. This chain is Aquaporin Z, found in Chromobacterium violaceum (strain ATCC 12472 / DSM 30191 / JCM 1249 / CCUG 213 / NBRC 12614 / NCIMB 9131 / NCTC 9757 / MK).